We begin with the raw amino-acid sequence, 207 residues long: MAASTASHRPIKGILKNKSSTTSSVVSTAEQPGKSVDEELSKKSQKWDEMSILATYHPADKDYGLMKIDEPSTPYHSMVADDEDALSDSETTEALTPDILARKLTAAAAESLEPKYRVREQESSGDEDSDLSPEEREKKRQFEMKRKLHYNEGLNIKLARQLISKDLNDEEEDEEMSETAAGESMNMEESSQGSATSDQLQNKSQSS.

Disordered stretches follow at residues Met1–Ser44, Leu65–Pro97, and Glu110–Arg146. At Ala2 the chain carries N-acetylalanine. Positions Lys12 to Asn17 are required for binding PPP1CC. A compositionally biased stretch (low complexity) spans Ser19 to Thr28. Positions Ser35–Ser44 are enriched in basic and acidic residues. The tract at residues Lys43–Thr55 is required for binding PPP1CC. Ser44 is subject to Phosphoserine; by ATM. The residue at position 73 (Thr73) is a Phosphothreonine; by GSK3. The segment covering Ala80–Thr91 has biased composition (acidic residues). 2 positions are modified to phosphoserine: Ser87 and Ser89. Thr92 and Thr96 each carry phosphothreonine. The span at Leu112–Glu122 shows a compositional bias: basic and acidic residues. Phosphoserine occurs at positions 123, 124, 129, and 132. Positions Ser123–Ser132 are enriched in acidic residues. Residues Pro133–Lys145 are compositionally biased toward basic and acidic residues. The segment at His149–Glu152 is required for binding PPP1CC catalytic center, displacing metal ions and inhibition of PPP1CC catalytic activity. Residues Lys165–Ser207 are disordered. Residues Asn168 to Ser177 show a composition bias toward acidic residues. The segment covering Met187–Ser207 has biased composition (polar residues).

This sequence belongs to the protein phosphatase inhibitor 2 family. Heterodimer with PP1. In terms of processing, phosphorylation on Ser-44 by ATM activates PP1 by dissociating the PP1-PPP1R2 complex. Phosphorylation on Thr-73 by GSK3 activates PP1 by dissociating the PP1-PPP1R2 complex.

In terms of biological role, inhibitor of protein-phosphatase 1. The protein is Protein phosphatase inhibitor 2 (PPP1R2) of Bos taurus (Bovine).